We begin with the raw amino-acid sequence, 79 residues long: NADH-ubiquinone oxidoreductase chain 4 (79 aa).

The next 2 helical transmembrane spans lie at 24–44 (SYTL…LANI) and 54–74 (LLIN…WFLL).

Belongs to the complex I subunit 4 family.

It localises to the mitochondrion membrane. It carries out the reaction a ubiquinone + NADH + 5 H(+)(in) = a ubiquinol + NAD(+) + 4 H(+)(out). Core subunit of the mitochondrial membrane respiratory chain NADH dehydrogenase (Complex I) that is believed to belong to the minimal assembly required for catalysis. Complex I functions in the transfer of electrons from NADH to the respiratory chain. The immediate electron acceptor for the enzyme is believed to be ubiquinone. In Simulium vittatum (Striped black fly), this protein is NADH-ubiquinone oxidoreductase chain 4 (ND4).